The primary structure comprises 196 residues: Peroxiredoxin TSA2 (196 aa).

Residues 3–161 (AEVQKQAPPF…ALRLVEGFQW (159 aa)) form the Thioredoxin domain. Lys-14 is covalently cross-linked (Glycyl lysine isopeptide (Lys-Gly) (interchain with G-Cter in ubiquitin)). Cys-48 (cysteine sulfenic acid (-SOH) intermediate) is an active-site residue. Glycyl lysine isopeptide (Lys-Gly) (interchain with G-Cter in ubiquitin) cross-links involve residues Lys-89 and Lys-132. Thr-174 bears the Phosphothreonine mark.

This sequence belongs to the peroxiredoxin family. AhpC/Prx1 subfamily. Homodimer; disulfide-linked, upon oxidation.

Its subcellular location is the cytoplasm. It catalyses the reaction a hydroperoxide + [thioredoxin]-dithiol = an alcohol + [thioredoxin]-disulfide + H2O. Functionally, thiol-specific peroxidase that catalyzes the reduction of hydrogen peroxide and organic hydroperoxides to water and alcohols, respectively. Plays a role in cell protection against oxidative stress by detoxifying peroxides and as sensor of hydrogen peroxide-mediated signaling events. Can act alternatively as peroxidase and molecular chaperone. Oxidative stress and heat shock exposure cause a reversible shift of the protein structure from low MW species to high MW complexes, triggering a peroxidase-to-chaperone functional switch. The chaperone function of the protein enhances resistance to heat shock. The sequence is that of Peroxiredoxin TSA2 from Saccharomyces cerevisiae (strain ATCC 204508 / S288c) (Baker's yeast).